The following is a 102-amino-acid chain: Small ribosomal subunit protein uS14 (102 aa).

This sequence belongs to the universal ribosomal protein uS14 family. In terms of assembly, part of the 30S ribosomal subunit. Contacts proteins S3 and S10.

Its function is as follows. Binds 16S rRNA, required for the assembly of 30S particles and may also be responsible for determining the conformation of the 16S rRNA at the A site. The sequence is that of Small ribosomal subunit protein uS14 from Dichelobacter nodosus (strain VCS1703A).